The chain runs to 469 residues: Glutamate--tRNA ligase 2 (469 aa).

The short motif at 8–18 is the 'HIGH' region element; that stretch reads PSPTGFLHVGG. The short motif at 250–254 is the 'KMSKS' region element; the sequence is KLSKR. Residue Lys253 participates in ATP binding.

The protein belongs to the class-I aminoacyl-tRNA synthetase family. Glutamate--tRNA ligase type 1 subfamily. Monomer.

It localises to the cytoplasm. The catalysed reaction is tRNA(Glu) + L-glutamate + ATP = L-glutamyl-tRNA(Glu) + AMP + diphosphate. Its function is as follows. Catalyzes the attachment of glutamate to tRNA(Glu) in a two-step reaction: glutamate is first activated by ATP to form Glu-AMP and then transferred to the acceptor end of tRNA(Glu). The protein is Glutamate--tRNA ligase 2 of Thermotoga sp. (strain RQ2).